Consider the following 117-residue polypeptide: Large ribosomal subunit protein eL8 (117 aa).

It belongs to the eukaryotic ribosomal protein eL8 family. In terms of assembly, part of the 50S ribosomal subunit. Probably part of the RNase P complex.

Its subcellular location is the cytoplasm. Its function is as follows. Multifunctional RNA-binding protein that recognizes the K-turn motif in ribosomal RNA, the RNA component of RNase P, box H/ACA, box C/D and box C'/D' sRNAs. The chain is Large ribosomal subunit protein eL8 from Methanococcus aeolicus (strain ATCC BAA-1280 / DSM 17508 / OCM 812 / Nankai-3).